The primary structure comprises 372 residues: O-glycoside alpha-1,2-mannosyltransferase homolog 2 (372 aa).

At 1–6 (MRISRL) the chain is on the cytoplasmic side. A helical; Signal-anchor for type II membrane protein transmembrane segment spans residues 7-27 (LIRVLLGFVILFITYILFPSI). Residues 28 to 372 (PKALVNTLNV…NLTNEDYDEL (345 aa)) lie on the Lumenal side of the membrane. The Nucleophile role is filled by Glu271.

It belongs to the glycosyltransferase 15 family.

The protein localises to the endoplasmic reticulum membrane. Probable mannosyltransferase involved in O-glycosylation of cell wall and secreted proteins. The polypeptide is O-glycoside alpha-1,2-mannosyltransferase homolog 2 (omh2) (Schizosaccharomyces pombe (strain 972 / ATCC 24843) (Fission yeast)).